We begin with the raw amino-acid sequence, 264 residues long: Thymidylate synthase (264 aa).

Residue arginine 21 coordinates dUMP. Histidine 51 contributes to the (6R)-5,10-methylene-5,6,7,8-tetrahydrofolate binding site. 126–127 (RR) is a binding site for dUMP. The active-site Nucleophile is the cysteine 146. DUMP-binding positions include 166 to 169 (RSAD), asparagine 177, and 207 to 209 (HIY). Residue aspartate 169 participates in (6R)-5,10-methylene-5,6,7,8-tetrahydrofolate binding. Alanine 263 serves as a coordination point for (6R)-5,10-methylene-5,6,7,8-tetrahydrofolate.

This sequence belongs to the thymidylate synthase family. Bacterial-type ThyA subfamily. In terms of assembly, homodimer.

It is found in the cytoplasm. It catalyses the reaction dUMP + (6R)-5,10-methylene-5,6,7,8-tetrahydrofolate = 7,8-dihydrofolate + dTMP. It functions in the pathway pyrimidine metabolism; dTTP biosynthesis. Its function is as follows. Catalyzes the reductive methylation of 2'-deoxyuridine-5'-monophosphate (dUMP) to 2'-deoxythymidine-5'-monophosphate (dTMP) while utilizing 5,10-methylenetetrahydrofolate (mTHF) as the methyl donor and reductant in the reaction, yielding dihydrofolate (DHF) as a by-product. This enzymatic reaction provides an intracellular de novo source of dTMP, an essential precursor for DNA biosynthesis. The chain is Thymidylate synthase from Parabacteroides distasonis (strain ATCC 8503 / DSM 20701 / CIP 104284 / JCM 5825 / NCTC 11152).